Here is a 282-residue protein sequence, read N- to C-terminus: 1,4-dihydroxy-6-naphtoate synthase (282 aa).

Substrate-binding positions include 57–59 and 109–110; these read KVS and TA. Residue His153 is the Proton acceptor of the active site.

The protein belongs to the MqnA/MqnD family. MqnD subfamily.

It catalyses the reaction cyclic dehypoxanthinylfutalosinate = 1,4-dihydroxy-6-naphthoate + dihydroxyacetone. It functions in the pathway quinol/quinone metabolism; menaquinone biosynthesis. Functionally, catalyzes the conversion of cyclic dehypoxanthine futalosine (cyclic DHFL) into 1,4-dihydroxy-6-naphthoate, a step in the biosynthesis of menaquinone (MK, vitamin K2). The chain is 1,4-dihydroxy-6-naphtoate synthase from Streptomyces coelicolor (strain ATCC BAA-471 / A3(2) / M145).